A 236-amino-acid chain; its full sequence is Eukaryotic translation initiation factor 3 subunit J (236 aa).

A disordered region spans residues 1–88 (MADDWESAAD…EAEAQRVASL (88 aa)). The span at 28-46 (GEDEDEDIKDSWEDEEEKK) shows a compositional bias: acidic residues. Basic and acidic residues-rich tracts occupy residues 47-58 (DEEKPTKTEAPA) and 68-77 (AKLEQQARLE).

Belongs to the eIF-3 subunit J family. In terms of assembly, component of the eukaryotic translation initiation factor 3 (eIF-3) complex. The eIF-3 complex interacts with pix.

It localises to the cytoplasm. In terms of biological role, component of the eukaryotic translation initiation factor 3 (eIF-3) complex, which is involved in protein synthesis of a specialized repertoire of mRNAs and, together with other initiation factors, stimulates binding of mRNA and methionyl-tRNAi to the 40S ribosome. The eIF-3 complex specifically targets and initiates translation of a subset of mRNAs involved in cell proliferation. The sequence is that of Eukaryotic translation initiation factor 3 subunit J from Drosophila erecta (Fruit fly).